The following is a 450-amino-acid chain: Molybdate-anion transporter (450 aa).

The next 12 membrane-spanning stretches (helical) occupy residues 1–21 (MLVT…GLEL), 43–63 (LDFY…APYL), 79–99 (ILYV…SSLV), 128–148 (FVLL…FSAF), 174–194 (AAFW…AVAS), 195–215 (WIGL…ALAG), 249–269 (VLLL…FVFL), 278–298 (GAPL…GSSL), 311–331 (PMHL…MLTF), 344–364 (FIAF…MSFL), 376–396 (GVLN…LLVL), and 409–429 (FSIC…LFTV).

It belongs to the major facilitator superfamily. As to expression, expressed ubiquitously but at relatively higher levels in the olfactory bulb and the skeletal muscle.

It is found in the cell membrane. In terms of biological role, mediates high-affinity intracellular uptake of the rare oligo-element molybdenum. The protein is Molybdate-anion transporter (MFSD5) of Homo sapiens (Human).